The chain runs to 447 residues: GTPase Der (447 aa).

2 EngA-type G domains span residues 4-165 (QIIT…PEEE) and 180-357 (LQIV…KIWN). Residues 10 to 17 (GRPNVGKS), 57 to 61 (DTPGL), 119 to 122 (NKCE), 186 to 193 (GRPNAGKS), 233 to 237 (DTAGL), and 298 to 301 (NKWD) contribute to the GTP site. In terms of domain architecture, KH-like spans 358–443 (KKITTSKLNE…PIRFTYVKTK (86 aa)).

Belongs to the TRAFAC class TrmE-Era-EngA-EngB-Septin-like GTPase superfamily. EngA (Der) GTPase family. As to quaternary structure, associates with the 50S ribosomal subunit.

GTPase that plays an essential role in the late steps of ribosome biogenesis. In Rickettsia rickettsii (strain Iowa), this protein is GTPase Der.